A 519-amino-acid chain; its full sequence is 2,3-bisphosphoglycerate-independent phosphoglycerate mutase (519 aa).

2 residues coordinate Mn(2+): D18 and S68. The active-site Phosphoserine intermediate is the S68. Substrate-binding positions include H129, 159 to 160 (RD), R191, R197, 267 to 270 (RADR), and K341. Residues D408, H412, D449, H450, and H468 each coordinate Mn(2+).

This sequence belongs to the BPG-independent phosphoglycerate mutase family. In terms of assembly, monomer. It depends on Mn(2+) as a cofactor.

It carries out the reaction (2R)-2-phosphoglycerate = (2R)-3-phosphoglycerate. Its pathway is carbohydrate degradation; glycolysis; pyruvate from D-glyceraldehyde 3-phosphate: step 3/5. Catalyzes the interconversion of 2-phosphoglycerate and 3-phosphoglycerate. This is 2,3-bisphosphoglycerate-independent phosphoglycerate mutase from Coxiella burnetii (strain RSA 331 / Henzerling II).